Here is a 180-residue protein sequence, read N- to C-terminus: RNA polymerase sigma-E factor (180 aa).

The Polymerase core binding signature appears at 36 to 49 (DLLQTALARTYGRW). The H-T-H motif DNA-binding region spans 130 to 149 (TEETAAALGMSAGTVKSTLH).

It belongs to the sigma-70 factor family. ECF subfamily.

The protein localises to the cytoplasm. In terms of biological role, sigma factors are initiation factors that promote the attachment of RNA polymerase to specific initiation sites and are then released. This sigma factor is required for the synthesis of the antibiotic actinomycin. This is RNA polymerase sigma-E factor (sigE) from Streptomyces antibioticus.